We begin with the raw amino-acid sequence, 209 residues long: MNSIKNHLMCEEIHKRFNLHPKVREAMESIEREVFVPAPFKHFAYTLNALSMQAQQYISSPLTVAKMTQYLEIDHVDSVLEIGCGSGYQAAVLSQIFRRVFSIERIESLYIEARLRLKTLGLDNVHVKFADGNKGWERYAPYDRILFSACAKNIPQALIDQLEEGGILVAPIQENNEQVIKRFVKQNNALRVQKVLEKCLFVPVVDGVQ.

Serine 59 is an active-site residue.

Belongs to the methyltransferase superfamily. L-isoaspartyl/D-aspartyl protein methyltransferase family. Monomer.

It localises to the cytoplasm. It catalyses the reaction [protein]-L-isoaspartate + S-adenosyl-L-methionine = [protein]-L-isoaspartate alpha-methyl ester + S-adenosyl-L-homocysteine. Functionally, catalyzes the methyl esterification of L-isoaspartyl residues in peptides and proteins that result from spontaneous decomposition of normal L-aspartyl and L-asparaginyl residues. It plays a role in the repair and/or degradation of damaged proteins. This Helicobacter pylori (strain J99 / ATCC 700824) (Campylobacter pylori J99) protein is Protein-L-isoaspartate O-methyltransferase (pcm).